Here is a 98-residue protein sequence, read N- to C-terminus: NADH-ubiquinone oxidoreductase chain 4L (98 aa).

Helical transmembrane passes span 2-22 (TQAS…TLIF), 29-49 (TLLC…MTAL), and 61-81 (IVML…LAMI).

This sequence belongs to the complex I subunit 4L family. In terms of assembly, core subunit of respiratory chain NADH dehydrogenase (Complex I) which is composed of 45 different subunits.

It localises to the mitochondrion inner membrane. The enzyme catalyses a ubiquinone + NADH + 5 H(+)(in) = a ubiquinol + NAD(+) + 4 H(+)(out). Core subunit of the mitochondrial membrane respiratory chain NADH dehydrogenase (Complex I) which catalyzes electron transfer from NADH through the respiratory chain, using ubiquinone as an electron acceptor. Part of the enzyme membrane arm which is embedded in the lipid bilayer and involved in proton translocation. The chain is NADH-ubiquinone oxidoreductase chain 4L (MT-ND4L) from Calomys musculinus (Drylands vesper mouse).